A 653-amino-acid polypeptide reads, in one-letter code: ATP-dependent zinc metalloprotease FtsH 1 (653 aa).

Topologically, residues 1–7 are cytoplasmic; sequence MSRFFKS. Residues 8-28 traverse the membrane as a helical segment; sequence AAFPILIVVVLAFFAQRLINP. Over 29–105 the chain is Extracellular; sequence GDSGPRYDYS…FDIEGTKSNG (77 aa). Residues 106–126 traverse the membrane as a helical segment; it reads WLSLLTYVLPFLIFIGFWIFL. The Cytoplasmic portion of the chain corresponds to 127–653; that stretch reads MNQVQGGGSK…MHFPERPELA (527 aa). Residue 198-205 participates in ATP binding; that stretch reads GPPGTGKT. Residue H420 participates in Zn(2+) binding. The active site involves E421. Residues H424 and D496 each contribute to the Zn(2+) site. The tract at residues 603–653 is disordered; sequence EEVFGAEASPPPDVPLPPATERGRDTPRPLPRPGLAGGAAEMHFPERPELA. Residues 611–620 show a composition bias toward pro residues; it reads SPPPDVPLPP.

It in the central section; belongs to the AAA ATPase family. The protein in the C-terminal section; belongs to the peptidase M41 family. As to quaternary structure, homohexamer. The cofactor is Zn(2+).

Its subcellular location is the cell membrane. Functionally, acts as a processive, ATP-dependent zinc metallopeptidase for both cytoplasmic and membrane proteins. Plays a role in the quality control of integral membrane proteins. The chain is ATP-dependent zinc metalloprotease FtsH 1 from Conexibacter woesei (strain DSM 14684 / CCUG 47730 / CIP 108061 / JCM 11494 / NBRC 100937 / ID131577).